The sequence spans 834 residues: Putative COX1/OXI3 intron 1 protein (834 aa).

Positions 162 to 188 (MKDTNNTKGNTKSEGSTERGNSGVDRG) are disordered. Residues 167-181 (NTKGNTKSEGSTERG) are compositionally biased toward polar residues. In terms of domain architecture, Reverse transcriptase spans 296 to 577 (LSNELGTGKF…TPARFLGYNI (282 aa)).

Its subcellular location is the mitochondrion. The chain is Putative COX1/OXI3 intron 1 protein (AI1) from Saccharomyces cerevisiae (strain ATCC 204508 / S288c) (Baker's yeast).